The chain runs to 173 residues: Crossover junction endodeoxyribonuclease RuvC (173 aa).

Active-site residues include aspartate 8, glutamate 67, and aspartate 139. Aspartate 8, glutamate 67, and aspartate 139 together coordinate Mg(2+).

It belongs to the RuvC family. As to quaternary structure, homodimer which binds Holliday junction (HJ) DNA. The HJ becomes 2-fold symmetrical on binding to RuvC with unstacked arms; it has a different conformation from HJ DNA in complex with RuvA. In the full resolvosome a probable DNA-RuvA(4)-RuvB(12)-RuvC(2) complex forms which resolves the HJ. It depends on Mg(2+) as a cofactor.

It localises to the cytoplasm. The catalysed reaction is Endonucleolytic cleavage at a junction such as a reciprocal single-stranded crossover between two homologous DNA duplexes (Holliday junction).. In terms of biological role, the RuvA-RuvB-RuvC complex processes Holliday junction (HJ) DNA during genetic recombination and DNA repair. Endonuclease that resolves HJ intermediates. Cleaves cruciform DNA by making single-stranded nicks across the HJ at symmetrical positions within the homologous arms, yielding a 5'-phosphate and a 3'-hydroxyl group; requires a central core of homology in the junction. The consensus cleavage sequence is 5'-(A/T)TT(C/G)-3'. Cleavage occurs on the 3'-side of the TT dinucleotide at the point of strand exchange. HJ branch migration catalyzed by RuvA-RuvB allows RuvC to scan DNA until it finds its consensus sequence, where it cleaves and resolves the cruciform DNA. The sequence is that of Crossover junction endodeoxyribonuclease RuvC from Proteus mirabilis (strain HI4320).